The sequence spans 821 residues: Spindle apparatus protein lin-5 (821 aa).

The tract at residues 161-199 is disordered; that stretch reads EASSGFRTPKRNNYSLTSLQTPTATARRLRTASSTARRS. Residues 162-180 show a composition bias toward polar residues; sequence ASSGFRTPKRNNYSLTSLQ. Positions 181–199 are enriched in low complexity; that stretch reads TPTATARRLRTASSTARRS. A coiled-coil region spans residues 211–634; sequence KFMRSERELK…REKESAEIKK (424 aa). 2 disordered regions span residues 736–758 and 779–821; these read RSES…FTPS and LKCS…SKKQ.

As to quaternary structure, interacts with gpr-1; gpr-1 forms a complex with gpr-2 and GDP-bound goa-1.

It localises to the cytoplasm. The protein localises to the cell cortex. Its subcellular location is the cytoskeleton. The protein resides in the spindle. It is found in the chromosome. It localises to the centromere. The protein localises to the kinetochore. Its subcellular location is the microtubule organizing center. The protein resides in the centrosome. Its function is as follows. Essential component of the spindle apparatus required for spindle positioning and chromosome movement. Acts to recruit or anchor gpr-1/gpr-2 complex to the spindle and cortex. Also involved, directly or indirectly, in cytokinesis and in the coupling of DNA replication, centrosome duplication and mitotic division. In Caenorhabditis elegans, this protein is Spindle apparatus protein lin-5 (lin-5).